We begin with the raw amino-acid sequence, 901 residues long: Protein translocase subunit SecA (901 aa).

ATP-binding positions include glutamine 87, 105-109 (GEGKT), and aspartate 512. The interval 859–901 (HQDDDSAAAAALAAQTGERKVGRNDPCPCGSGKKYKQCHGRLQ) is disordered. Positions 885, 887, 896, and 897 each coordinate Zn(2+). Over residues 891-901 (KKYKQCHGRLQ) the composition is skewed to basic residues.

This sequence belongs to the SecA family. In terms of assembly, monomer and homodimer. Part of the essential Sec protein translocation apparatus which comprises SecA, SecYEG and auxiliary proteins SecDF-YajC and YidC. Requires Zn(2+) as cofactor.

It is found in the cell inner membrane. The protein localises to the cytoplasm. The catalysed reaction is ATP + H2O + cellular proteinSide 1 = ADP + phosphate + cellular proteinSide 2.. Part of the Sec protein translocase complex. Interacts with the SecYEG preprotein conducting channel. Has a central role in coupling the hydrolysis of ATP to the transfer of proteins into and across the cell membrane, serving both as a receptor for the preprotein-SecB complex and as an ATP-driven molecular motor driving the stepwise translocation of polypeptide chains across the membrane. The sequence is that of Protein translocase subunit SecA from Escherichia coli O127:H6 (strain E2348/69 / EPEC).